The sequence spans 417 residues: FK506-binding protein 3 (417 aa).

Disordered stretches follow at residues 42–129 (SLDD…LSPE) and 191–307 (EGCG…DKPK). Composition is skewed to acidic residues over residues 61-84 (FDDE…EESE), 99-120 (SEEE…EFEE), and 197-222 (CACD…DASD). Composition is skewed to basic and acidic residues over residues 236-249 (ANEK…EPKA) and 256-307 (DQKD…DKPK). A PPIase FKBP-type domain is found at 331 to 417 (GARVGMRYIG…TFDVKLVSLK (87 aa)).

This sequence belongs to the FKBP-type PPIase family. FKBP3/4 subfamily.

It localises to the nucleus. Its subcellular location is the nucleolus. It catalyses the reaction [protein]-peptidylproline (omega=180) = [protein]-peptidylproline (omega=0). Its activity is regulated as follows. Inhibited by both FK506 and rapamycin. Functionally, PPIases accelerate the folding of proteins. It catalyzes the cis-trans isomerization of proline imidic peptide bonds in oligopeptides. In Eremothecium gossypii (strain ATCC 10895 / CBS 109.51 / FGSC 9923 / NRRL Y-1056) (Yeast), this protein is FK506-binding protein 3 (FPR3).